Consider the following 478-residue polypeptide: MSRGTIYTESTMDFQKVRKIQFGLLDPKEIQAMSVVQVENEKIYDNGIPTDGGINDLRMGTMEKAMRCSTCQGDSKECPGHFGHIELAQPVFHIGFIDLVKKILKCVCFNCNKLLITDKHDKYSALKRVKDPKLKLNKVYKVCKDIKVCGKADRKSETYTEGSGQKQPRLRKTGLKIKAEFPIDEDDPSTNDNKRDLSASECLKILGRISPDDCKFLGFDMVLARPEWLIISRLPVAPPPVRPSVCMGSNIRQEDDLTHQYQQILKANNQLRKHLSTANHIINENYQLLQFYCATLIDNEQAGQMVSRHKSGGKAIKAIRARLKGKEGRLRGNLMGKRVDFSARTVITCDPTLDLDQLGVPRSIAENITIPEVVTPQNIDEMRKLVINGPNKWPGAKYIKGEGGKMIDLSYAKTTETFIDYGYVIERHLKNDDFVLFNRQPSLHKMSIMGHRVKVLPYSTFRLNLSVTAPYNADFDGS.

Residues Cys-68, Cys-71, Cys-78, His-81, Cys-108, Cys-111, and Cys-149 each contribute to the Zn(2+) site. Residues Asp-474 and Asp-476 each coordinate Mg(2+).

The protein belongs to the RNA polymerase beta' chain family. In terms of assembly, component of the RNA polymerase II (Pol II) complex consisting of 12 subunits. Post-translationally, phosphorylation activates POL II.

The protein resides in the nucleus. The catalysed reaction is RNA(n) + a ribonucleoside 5'-triphosphate = RNA(n+1) + diphosphate. Functionally, DNA-dependent RNA polymerase catalyzes the transcription of DNA into RNA using the four ribonucleoside triphosphates as substrates. Largest and catalytic component of RNA polymerase II which synthesizes mRNA precursors and many functional non-coding RNAs. Forms the polymerase active center together with the second largest subunit. Pol II is the central component of the basal RNA polymerase II transcription machinery. It is composed of mobile elements that move relative to each other. RPB1 is part of the core element with the central large cleft, the clamp element that moves to open and close the cleft and the jaws that are thought to grab the incoming DNA template. At the start of transcription, a single-stranded DNA template strand of the promoter is positioned within the central active site cleft of Pol II. A bridging helix emanates from RPB1 and crosses the cleft near the catalytic site and is thought to promote translocation of Pol II by acting as a ratchet that moves the RNA-DNA hybrid through the active site by switching from straight to bent conformations at each step of nucleotide addition. During transcription elongation, Pol II moves on the template as the transcript elongates. Elongation is influenced by the phosphorylation status of the C-terminal domain (CTD) of Pol II largest subunit (RPB1), which serves as a platform for assembly of factors that regulate transcription initiation, elongation, termination and mRNA processing. This Euplotoides octocarinatus (Freshwater ciliate) protein is DNA-directed RNA polymerase II subunit RPB1 (RPB1).